Reading from the N-terminus, the 203-residue chain is Fucoxanthin-chlorophyll a-c binding protein, chloroplastic (203 aa).

A chloroplast-targeting transit peptide spans Met-1–Met-30.

It belongs to the fucoxanthin chlorophyll protein family. In terms of assembly, the LHC complex of chromophytic algae is composed of fucoxanthin, chlorophyll A and C bound non-covalently by fucoxanthin chlorophyll proteins (FCPs). The ratio of pigments in this LHC is; fucoxanthin: chlorophyll C: chlorophyll A; (0.6-1): (0.1-0.3): (1).

Its subcellular location is the plastid. The protein localises to the chloroplast thylakoid membrane. The light-harvesting complex (LHC) functions as a light receptor, it captures and delivers excitation energy to photosystems with which it is closely associated. Energy is transferred from the carotenoid and chlorophyll C (or B) to chlorophyll A and the photosynthetic reaction centers where it is used to synthesize ATP and reducing power. The chain is Fucoxanthin-chlorophyll a-c binding protein, chloroplastic (FCPA) from Trieres chinensis (Marine centric diatom).